Reading from the N-terminus, the 473-residue chain is Ribulose bisphosphate carboxylase large chain (473 aa).

Asn116 and Thr166 together coordinate substrate. The Proton acceptor role is filled by Lys168. Substrate is bound at residue Lys170. 3 residues coordinate Mg(2+): Lys194, Asp196, and Glu197. Position 194 is an N6-carboxylysine (Lys194). Catalysis depends on His287, which acts as the Proton acceptor. Residues Arg288, His320, and Ser372 each contribute to the substrate site.

It belongs to the RuBisCO large chain family. Type I subfamily. As to quaternary structure, heterohexadecamer of 8 large chains and 8 small chains. In R.sphaeroides the complex is approximately 500 kDa. The cofactor is Mg(2+).

It catalyses the reaction 2 (2R)-3-phosphoglycerate + 2 H(+) = D-ribulose 1,5-bisphosphate + CO2 + H2O. The enzyme catalyses D-ribulose 1,5-bisphosphate + O2 = 2-phosphoglycolate + (2R)-3-phosphoglycerate + 2 H(+). Functionally, ruBisCO catalyzes two reactions: the carboxylation of D-ribulose 1,5-bisphosphate, the primary event in carbon dioxide fixation, as well as the oxidative fragmentation of the pentose substrate. Both reactions occur simultaneously and in competition at the same active site. The protein is Ribulose bisphosphate carboxylase large chain of Thiobacillus denitrificans (strain ATCC 25259 / T1).